Reading from the N-terminus, the 572-residue chain is Mitochondrial distribution and morphology protein 34 (572 aa).

An SMP-LTD domain is found at 1-195 (MAFNFNWSPL…LPAIIHRLSL (195 aa)). 4 disordered regions span residues 208–236 (LQTQ…VDAL), 296–405 (PSDQ…CSAP), 455–518 (RDTA…PFIN), and 551–572 (NACG…AYGH). Residues 296–347 (PSDQTDASGGVTSPFSPVLSRTQSQVGSMSSFPDSASMVSNQSRSSTPSHTF) show a composition bias toward polar residues. Basic residues predominate over residues 358–370 (RHSKAHARKRKKR). Basic and acidic residues predominate over residues 371–381 (VVDLRRPKTTD). Composition is skewed to polar residues over residues 387-401 (SDES…TPSI) and 498-511 (ATGS…QLPS).

The protein belongs to the MDM34 family. As to quaternary structure, component of the ER-mitochondria encounter structure (ERMES) or MDM complex, composed of mmm1, mdm10, mdm12 and mdm34.

The protein resides in the mitochondrion outer membrane. Its function is as follows. Component of the ERMES/MDM complex, which serves as a molecular tether to connect the endoplasmic reticulum (ER) and mitochondria. Components of this complex are involved in the control of mitochondrial shape and protein biogenesis, and function in nonvesicular lipid trafficking between the ER and mitochondria. Mdm34 is required for the interaction of the ER-resident membrane protein mmm1 and the outer mitochondrial membrane-resident beta-barrel protein mdm10. This Neosartorya fischeri (strain ATCC 1020 / DSM 3700 / CBS 544.65 / FGSC A1164 / JCM 1740 / NRRL 181 / WB 181) (Aspergillus fischerianus) protein is Mitochondrial distribution and morphology protein 34.